Consider the following 337-residue polypeptide: MKIAIVNDMPLAVEALRRAVALEPAHQVVWVASNGAEAVQRCTEQLPDLILMDLIMPVMDGVEATRRIMAETPCAIVIVTVDRKQNVHRVFEAMGHGALDVVDTPALGAGDAREAAAPLLRKILNIGWLVGQQRAPAARSVAAPLREASQRRGLVAIGSSAGGPAALEVLLKGLPAAFPAAIVLVQHVDQVFAAGMAEWLSSAAGLPVRLAREGEPPQPGQVLLAGTNHHIRLLQNGQLAYTAEPVNEIYRPSIDVFFESVARYWNGDAVGVLLTGMGRDGAQGLKLMRQQGFLTIAQDQASSAVYGMPKAAAAIDAAVEIRPLERIAGRLTEFFAK.

The Response regulatory domain maps to 2-119 (KIAIVNDMPL…GDAREAAAPL (118 aa)). Aspartate 53 is subject to 4-aspartylphosphate. Positions 144–337 (PLREASQRRG…AGRLTEFFAK (194 aa)) constitute a CheB-type methylesterase domain. Residues serine 160, histidine 187, and aspartate 280 contribute to the active site.

It belongs to the CheB family. In terms of processing, phosphorylated by CheA. Phosphorylation of the N-terminal regulatory domain activates the methylesterase activity.

It localises to the cytoplasm. The catalysed reaction is [protein]-L-glutamate 5-O-methyl ester + H2O = L-glutamyl-[protein] + methanol + H(+). It catalyses the reaction L-glutaminyl-[protein] + H2O = L-glutamyl-[protein] + NH4(+). Involved in chemotaxis. Part of a chemotaxis signal transduction system that modulates chemotaxis in response to various stimuli. Catalyzes the demethylation of specific methylglutamate residues introduced into the chemoreceptors (methyl-accepting chemotaxis proteins or MCP) by CheR. Also mediates the irreversible deamidation of specific glutamine residues to glutamic acid. This chain is Protein-glutamate methylesterase/protein-glutamine glutaminase of group 3 operon, found in Pseudomonas putida (strain ATCC 47054 / DSM 6125 / CFBP 8728 / NCIMB 11950 / KT2440).